The sequence spans 290 residues: Acetyl-coenzyme A carboxylase carboxyl transferase subunit beta (290 aa).

The CoA carboxyltransferase N-terminal domain occupies 30-290 (IMTKCPKCKK…HAGQEVNKDA (261 aa)). 4 residues coordinate Zn(2+): C34, C37, C53, and C56. The C4-type zinc-finger motif lies at 34–56 (CPKCKKIMYTKELSENLNVCFNC).

This sequence belongs to the AccD/PCCB family. In terms of assembly, acetyl-CoA carboxylase is a heterohexamer composed of biotin carboxyl carrier protein (AccB), biotin carboxylase (AccC) and two subunits each of ACCase subunit alpha (AccA) and ACCase subunit beta (AccD). Zn(2+) is required as a cofactor.

The protein localises to the cytoplasm. The catalysed reaction is N(6)-carboxybiotinyl-L-lysyl-[protein] + acetyl-CoA = N(6)-biotinyl-L-lysyl-[protein] + malonyl-CoA. Its pathway is lipid metabolism; malonyl-CoA biosynthesis; malonyl-CoA from acetyl-CoA: step 1/1. Component of the acetyl coenzyme A carboxylase (ACC) complex. Biotin carboxylase (BC) catalyzes the carboxylation of biotin on its carrier protein (BCCP) and then the CO(2) group is transferred by the transcarboxylase to acetyl-CoA to form malonyl-CoA. The polypeptide is Acetyl-coenzyme A carboxylase carboxyl transferase subunit beta (Staphylococcus carnosus (strain TM300)).